Reading from the N-terminus, the 274-residue chain is GATA transcription factor 1 (274 aa).

Disordered stretches follow at residues 1-39 (MEME…KTGL) and 102-132 (SPVS…TAVA). Positions 152–159 (KARSKRRR) match the Nuclear localization signal motif. The GATA-type zinc finger occupies 190–244 (LIMGRKCQHCGAEKTPQWRAGPAGPKTLCNACGVRYKSGRLVPEYRPANSPTFTA).

It belongs to the type IV zinc-finger family. Class A subfamily. Mostly expressed in roots. Also expressed in stems, flowers and leaves.

Its subcellular location is the nucleus. Transcriptional activator that specifically binds 5'-GATA-3' or 5'-GAT-3' motifs within gene promoters. May be involved in the regulation of some light-responsive genes. The chain is GATA transcription factor 1 (GATA1) from Arabidopsis thaliana (Mouse-ear cress).